Here is a 415-residue protein sequence, read N- to C-terminus: Serine hydroxymethyltransferase (415 aa).

(6S)-5,6,7,8-tetrahydrofolate contacts are provided by residues Leu117 and 121–123 (GHL). Lys226 is subject to N6-(pyridoxal phosphate)lysine. Residues Glu241 and 349–351 (SPF) contribute to the (6S)-5,6,7,8-tetrahydrofolate site.

It belongs to the SHMT family. Homodimer. Pyridoxal 5'-phosphate is required as a cofactor.

It localises to the cytoplasm. It carries out the reaction (6R)-5,10-methylene-5,6,7,8-tetrahydrofolate + glycine + H2O = (6S)-5,6,7,8-tetrahydrofolate + L-serine. It participates in one-carbon metabolism; tetrahydrofolate interconversion. It functions in the pathway amino-acid biosynthesis; glycine biosynthesis; glycine from L-serine: step 1/1. Its function is as follows. Catalyzes the reversible interconversion of serine and glycine with tetrahydrofolate (THF) serving as the one-carbon carrier. This reaction serves as the major source of one-carbon groups required for the biosynthesis of purines, thymidylate, methionine, and other important biomolecules. Also exhibits THF-independent aldolase activity toward beta-hydroxyamino acids, producing glycine and aldehydes, via a retro-aldol mechanism. The polypeptide is Serine hydroxymethyltransferase (Geotalea uraniireducens (strain Rf4) (Geobacter uraniireducens)).